A 143-amino-acid polypeptide reads, in one-letter code: Transcriptional regulator MraZ (143 aa).

2 consecutive SpoVT-AbrB domains span residues 5 to 47 and 76 to 119; these read EYFH…PVSA and ASNQ…DKEK.

This sequence belongs to the MraZ family. As to quaternary structure, forms oligomers.

Its subcellular location is the cytoplasm. The protein resides in the nucleoid. The protein is Transcriptional regulator MraZ of Finegoldia magna (strain ATCC 29328 / DSM 20472 / WAL 2508) (Peptostreptococcus magnus).